Consider the following 394-residue polypeptide: Probable ribosome production factor 1 (394 aa).

2 disordered regions span residues 1–98 (MIKI…PVLN) and 116–152 (MKKE…EKDQ). 2 stretches are compositionally biased toward acidic residues: residues 15–33 (QDSD…DLEV) and 59–88 (ASED…DDDD). A compositionally biased stretch (basic residues) spans 116–134 (MKKEKHKKKMQERRARRKA). Residues 185-369 (PKVLITFADN…LRSLQEGTFD (185 aa)) enclose the Brix domain. An RNA-binding region spans residues 347–364 (VKLRELGPRFTLKLRSLQ).

The protein localises to the nucleus. It is found in the nucleolus. May be required for ribosome biogenesis. This chain is Probable ribosome production factor 1, found in Drosophila melanogaster (Fruit fly).